The chain runs to 921 residues: Probable glucan 1,3-alpha-glucosidase (921 aa).

The first 20 residues, 1–20 (MRSLLFVLSLICFCSQTALS), serve as a signal peptide directing secretion. Aspartate 512 (nucleophile) is an active-site residue. The active site involves glutamate 515. Catalysis depends on aspartate 588, which acts as the Proton donor. 2 N-linked (GlcNAc...) asparagine glycosylation sites follow: asparagine 689 and asparagine 804.

The protein belongs to the glycosyl hydrolase 31 family. In terms of assembly, heterodimer of a catalytic alpha subunit (PSL5) and a beta subunit (PSL4). Expressed in roots, rosette leaves, leaf blades, mature stems, cauline leaves, flower buds, flowers and siliques.

The protein localises to the endoplasmic reticulum. The catalysed reaction is Hydrolysis of terminal (1-&gt;3)-alpha-D-glucosidic links in (1-&gt;3)-alpha-D-glucans.. Its pathway is glycan metabolism; N-glycan metabolism. In terms of biological role, cleaves sequentially the 2 innermost alpha-1,3-linked glucose residues from the Glc(2)Man(9)GlcNAc(2) oligosaccharide precursor of immature glycoproteins. Essential for stable accumulation of the receptor EFR that determines the specific perception of bacterial elongation factor Tu (EF-Tu), a potent elicitor of the defense response to pathogen-associated molecular patterns (PAMPs). Required for sustained activation of EFR-mediated signaling, but not receptor FLS2-mediated signaling elicited by the bacterial flagellin flg22. This chain is Probable glucan 1,3-alpha-glucosidase (PSL5), found in Arabidopsis thaliana (Mouse-ear cress).